The following is a 110-amino-acid chain: Large ribosomal subunit protein uL22 (110 aa).

The protein belongs to the universal ribosomal protein uL22 family. Part of the 50S ribosomal subunit.

In terms of biological role, this protein binds specifically to 23S rRNA; its binding is stimulated by other ribosomal proteins, e.g. L4, L17, and L20. It is important during the early stages of 50S assembly. It makes multiple contacts with different domains of the 23S rRNA in the assembled 50S subunit and ribosome. Functionally, the globular domain of the protein is located near the polypeptide exit tunnel on the outside of the subunit, while an extended beta-hairpin is found that lines the wall of the exit tunnel in the center of the 70S ribosome. This is Large ribosomal subunit protein uL22 from Haemophilus influenzae (strain 86-028NP).